The primary structure comprises 95 residues: Large ribosomal subunit protein bL27 (95 aa).

A propeptide spanning residues 1–12 (MLLIKKINLQFF) is cleaved from the precursor. Residues 17–37 (GVGSTKNGRDSNPKYLGAKKS) are disordered.

It belongs to the bacterial ribosomal protein bL27 family. The N-terminus is cleaved by ribosomal processing cysteine protease Prp.

In Malacoplasma penetrans (strain HF-2) (Mycoplasma penetrans), this protein is Large ribosomal subunit protein bL27.